We begin with the raw amino-acid sequence, 375 residues long: Phosphoglucan phosphatase DSP4, amyloplastic (375 aa).

Residues 1 to 42 (MFCVQNLPRSSALPLQSFKSHQRRPPCSVNTLGVMSNVNLHR) constitute an amyloplast transit peptide. The tract at residues 49–71 (ISGPTSSAETSDANVEEEKSETY) is disordered. A compositionally biased stretch (polar residues) spans 51 to 61 (GPTSSAETSDA). Positions 92–249 (NYNFIRPDLI…AADILTGLRK (158 aa)) constitute a Tyrosine-protein phosphatase domain. Cys-193 serves as the catalytic Phosphocysteine intermediate. 194–199 (TAGLGR) is a substrate binding site. Residues 254 to 330 (LTWKNPDCTT…NKDGHVNNFV (77 aa)) are polysaccharide binding.

In terms of tissue distribution, expressed in phloem parenchyma of 16-24 week old seedlings and 2 year old trees (at protein level). Expressed in leaves of 16-24 week old seedlings and 2 year old trees.

Its subcellular location is the plastid. It localises to the amyloplast. The protein resides in the nucleus. In terms of biological role, starch granule-associated phosphoglucan phosphatase involved in the control of starch accumulation. Acts as a major regulator of the initial steps of starch degradation at the granule surface. Functions during the day by dephosphorylating the night-accumulated phospho-oligosaccharides. Can release phosphate from both the C6 and the C3 positions. The sequence is that of Phosphoglucan phosphatase DSP4, amyloplastic from Castanea sativa (Sweet chestnut).